Consider the following 195-residue polypeptide: COMM domain-containing protein 3 (195 aa).

The region spanning 124–193 is the COMM domain; it reads HITDVSWRLE…DASKSLERAT (70 aa).

Belongs to the COMM domain-containing protein 3 family. In terms of assembly, component of the commander complex consisting of the CCC subcomplex and the retriever subcomplex. Component of the CCC (COMMD/CCDC22/CCDC93) subcomplex consisting of COMMD1, COMMD2, COMMD3, COMMD4, COMMD5, COMMD6, COMMD7, COMMD8, COMMD9, COMMD10, CCDC22 and CCDC93; within the complex forms a heterodimer with COMMD2. Interacts with NFKB1/p105. Interacts with CCDC22, CCDC93, SCNN1B, CUL3, CUL4A, CUL4B, CUL5. In terms of tissue distribution, widely expressed with highest expression in thymus.

The protein localises to the cytoplasm. Its subcellular location is the nucleus. Functionally, scaffold protein in the commander complex that is essential for endosomal recycling of transmembrane cargos; the commander complex is composed of the CCC subcomplex and the retriever subcomplex. May modulate activity of cullin-RING E3 ubiquitin ligase (CRL) complexes. May down-regulate activation of NF-kappa-B. Modulates Na(+) transport in epithelial cells by regulation of apical cell surface expression of amiloride-sensitive sodium channel (ENaC) subunits. The chain is COMM domain-containing protein 3 (COMMD3) from Homo sapiens (Human).